Reading from the N-terminus, the 434-residue chain is UDP-N-acetylmuramoylalanine--D-glutamate ligase (434 aa).

Glycine 126–threonine 132 is a binding site for ATP.

The protein belongs to the MurCDEF family.

The protein resides in the cytoplasm. It catalyses the reaction UDP-N-acetyl-alpha-D-muramoyl-L-alanine + D-glutamate + ATP = UDP-N-acetyl-alpha-D-muramoyl-L-alanyl-D-glutamate + ADP + phosphate + H(+). It participates in cell wall biogenesis; peptidoglycan biosynthesis. Functionally, cell wall formation. Catalyzes the addition of glutamate to the nucleotide precursor UDP-N-acetylmuramoyl-L-alanine (UMA). The protein is UDP-N-acetylmuramoylalanine--D-glutamate ligase of Desulfovibrio desulfuricans (strain ATCC 27774 / DSM 6949 / MB).